We begin with the raw amino-acid sequence, 306 residues long: Recombination-associated protein RdgC (306 aa).

This sequence belongs to the RdgC family.

Its subcellular location is the cytoplasm. The protein localises to the nucleoid. May be involved in recombination. This Pseudomonas aeruginosa (strain ATCC 15692 / DSM 22644 / CIP 104116 / JCM 14847 / LMG 12228 / 1C / PRS 101 / PAO1) protein is Recombination-associated protein RdgC.